We begin with the raw amino-acid sequence, 556 residues long: 2-succinyl-5-enolpyruvyl-6-hydroxy-3-cyclohexene-1-carboxylate synthase (556 aa).

This sequence belongs to the TPP enzyme family. MenD subfamily. As to quaternary structure, homodimer. The cofactor is Mg(2+). It depends on Mn(2+) as a cofactor. Thiamine diphosphate serves as cofactor.

It catalyses the reaction isochorismate + 2-oxoglutarate + H(+) = 5-enolpyruvoyl-6-hydroxy-2-succinyl-cyclohex-3-ene-1-carboxylate + CO2. Its pathway is quinol/quinone metabolism; 1,4-dihydroxy-2-naphthoate biosynthesis; 1,4-dihydroxy-2-naphthoate from chorismate: step 2/7. It participates in quinol/quinone metabolism; menaquinone biosynthesis. In terms of biological role, catalyzes the thiamine diphosphate-dependent decarboxylation of 2-oxoglutarate and the subsequent addition of the resulting succinic semialdehyde-thiamine pyrophosphate anion to isochorismate to yield 2-succinyl-5-enolpyruvyl-6-hydroxy-3-cyclohexene-1-carboxylate (SEPHCHC). The chain is 2-succinyl-5-enolpyruvyl-6-hydroxy-3-cyclohexene-1-carboxylate synthase from Staphylococcus epidermidis (strain ATCC 35984 / DSM 28319 / BCRC 17069 / CCUG 31568 / BM 3577 / RP62A).